The following is a 158-amino-acid chain: NAD(P)H-quinone oxidoreductase subunit N (158 aa).

The protein belongs to the complex I NdhN subunit family. In terms of assembly, NDH-1 can be composed of about 15 different subunits; different subcomplexes with different compositions have been identified which probably have different functions.

It localises to the cellular thylakoid membrane. It catalyses the reaction a plastoquinone + NADH + (n+1) H(+)(in) = a plastoquinol + NAD(+) + n H(+)(out). The catalysed reaction is a plastoquinone + NADPH + (n+1) H(+)(in) = a plastoquinol + NADP(+) + n H(+)(out). In terms of biological role, NDH-1 shuttles electrons from an unknown electron donor, via FMN and iron-sulfur (Fe-S) centers, to quinones in the respiratory and/or the photosynthetic chain. The immediate electron acceptor for the enzyme in this species is believed to be plastoquinone. Couples the redox reaction to proton translocation, and thus conserves the redox energy in a proton gradient. Cyanobacterial NDH-1 also plays a role in inorganic carbon-concentration. This is NAD(P)H-quinone oxidoreductase subunit N from Nostoc punctiforme (strain ATCC 29133 / PCC 73102).